Consider the following 542-residue polypeptide: MSKIIAFDEEARRGLERGMNQLADAVKVTLGPKGRNVVLEKKWGAPTITNDGVSIAKEIELEDPYEKIGAELVKEVAKKTDDVAGDGTTTATVLAQALVREGLRNVAAGANPMGLKRGIEKAVEAVTEQLLGAAKEVTTKEQIAATAGISAGDASIGELIAEALDKVGKEGVITVEESNTFGLELELTEGMRFDKGYISPYFVTDAERQETELEDPYILILNSKISTVKDLLPLLEKVMQSGKPLVIVAEDVEGEALATLVVNKIRGTFKSVAVKAPGFGDRRKAMLGDIAILTGGQVISEEVGLKLDTADLDLLGRARKVVVTKDETTIVEGAGDADAIAGRVGQIRAEIERSDSDYDREKLQERLAKLAGGVAVIKAGAATEVELKERKHRIEDAVRNAKAAVEEGIVAGGGVALIQAGVLAFEKLELVGDEATGANIVKVAIEAPLKQIAINAGLEGGVVAEKVRNLPTGHGLNAATGEYVDLLGAGINDPVKVTRSALQNAASIAALFLTTEAVIADKPEKAAAAPAGGDGGMGGMDF.

ATP-binding positions include 29 to 32 (TLGP), 86 to 90 (DGTTT), Gly413, 477 to 479 (NAA), and Asp493.

The protein belongs to the chaperonin (HSP60) family. As to quaternary structure, forms a cylinder of 14 subunits composed of two heptameric rings stacked back-to-back. Interacts with the co-chaperonin GroES.

Its subcellular location is the cytoplasm. It carries out the reaction ATP + H2O + a folded polypeptide = ADP + phosphate + an unfolded polypeptide.. Its function is as follows. Together with its co-chaperonin GroES, plays an essential role in assisting protein folding. The GroEL-GroES system forms a nano-cage that allows encapsulation of the non-native substrate proteins and provides a physical environment optimized to promote and accelerate protein folding. The polypeptide is Chaperonin GroEL 2 (Kineococcus radiotolerans (strain ATCC BAA-149 / DSM 14245 / SRS30216)).